Here is a 708-residue protein sequence, read N- to C-terminus: Leukotoxin translocation ATP-binding protein LktB (708 aa).

The Peptidase C39 domain occupies 1-126 (MEANHQRNDL…ACYQGQLILV (126 aa)). The ABC transmembrane type-1 domain occupies 155-437 (FLETLIVSIF…LAQLWQDFQQ (283 aa)). 5 helical membrane passes run 159-179 (LIVS…FQVV), 192-212 (LNII…LSGL), 270-290 (ALTS…MWYY), 296-316 (LVIL…SPIL), and 389-409 (VMVI…LSIG). The ABC transporter domain occupies 469–704 (ISFKNIRFRY…SNGLYSYLHQ (236 aa)). 503–510 (GRSGSGKS) contacts ATP.

Belongs to the ABC transporter superfamily. Protein-1 exporter (TC 3.A.1.109) family. As to quaternary structure, homodimer.

The protein localises to the cell inner membrane. The enzyme catalyses ATP + H2O + proteinSide 1 = ADP + phosphate + proteinSide 2.. In terms of biological role, part of the ABC transporter complex LktBD involved in leukotoxin export. Transmembrane domains (TMD) form a pore in the inner membrane and the ATP-binding domain (NBD) is responsible for energy generation. This chain is Leukotoxin translocation ATP-binding protein LktB (lktB), found in Mannheimia haemolytica (Pasteurella haemolytica).